The sequence spans 73 residues: Sec-independent protein translocase protein TatA (73 aa).

The helical transmembrane segment at 1-21 threads the bilayer; that stretch reads MGSFSIGHWLIVLAIIVLLFG. Positions 43-73 are disordered; sequence MEDTTPEKSEKVEHKEESATSQKIEETTKNA.

This sequence belongs to the TatA/E family. The Tat system comprises two distinct complexes: a TatABC complex, containing multiple copies of TatA, TatB and TatC subunits, and a separate TatA complex, containing only TatA subunits. Substrates initially bind to the TatABC complex, which probably triggers association of the separate TatA complex to form the active translocon.

The protein resides in the cell inner membrane. In terms of biological role, part of the twin-arginine translocation (Tat) system that transports large folded proteins containing a characteristic twin-arginine motif in their signal peptide across membranes. TatA could form the protein-conducting channel of the Tat system. In Campylobacter concisus (strain 13826), this protein is Sec-independent protein translocase protein TatA.